The chain runs to 215 residues: 5'-deoxynucleotidase YGK1 (215 aa).

The region spanning 58-164 (ISDHMYRMGL…VKDIDKYEML (107 aa)) is the HD domain. 7 residues coordinate a divalent metal cation: His-61, His-89, Asp-90, Glu-93, Asp-98, Ile-99, and Asp-159.

This sequence belongs to the HDDC2 family. Homodimer. Mn(2+) serves as cofactor. Requires Co(2+) as cofactor. It depends on Mg(2+) as a cofactor.

It carries out the reaction a 2'-deoxyribonucleoside 5'-phosphate + H2O = a 2'-deoxyribonucleoside + phosphate. Its function is as follows. Catalyzes the dephosphorylation of the nucleoside 5'-monophosphates deoxyadenosine monophosphate (dAMP), deoxycytidine monophosphate (dCMP), deoxyguanosine monophosphate (dGMP) and deoxythymidine monophosphate (dTMP). The protein is 5'-deoxynucleotidase YGK1 of Saccharomyces cerevisiae (strain ATCC 204508 / S288c) (Baker's yeast).